Consider the following 382-residue polypeptide: MNLKEKTRALFAEIFGYPATHTIQAPGRVNLIGEHTDYNDGFVLPCAIDYQTVISCAPRDDRTVRVIAADYDNQADEFSLDAPIVTHDSQQWSNYVRGVVKHLQQRNNAFGGVDMVISGNVPQGAGLSSSASLEVAVGTVFQQLYHLPLDGAQIALNGQEAENQFVGCNCGIMDQLISALGKKDHALLIDCRTLGAKAVSMPKGVAVVIINSNFKRTLVGSEYNTRREQCETGARFFQQPALRDVSLEAFNAVASELDPVVAKRVRHVLSENARTVEAASALEKGDLQRMGQLMAESHASMRDDFEITVPQIDTLVDIVKATIGDQGGVRMTGGGFGGCVVALIPEDLVPAVQQAVAQQYEAKTGIKETFYVCKSSQGAGQC.

A substrate-binding site is contributed by glutamate 34–aspartate 37. Glycine 124–serine 130 contributes to the ATP binding site. Residues serine 130 and glutamate 162 each contribute to the Mg(2+) site. The active-site Proton acceptor is the aspartate 174. Tyrosine 223 contacts substrate.

The protein belongs to the GHMP kinase family. GalK subfamily.

It is found in the cytoplasm. The catalysed reaction is alpha-D-galactose + ATP = alpha-D-galactose 1-phosphate + ADP + H(+). It functions in the pathway carbohydrate metabolism; galactose metabolism. In terms of biological role, catalyzes the transfer of the gamma-phosphate of ATP to D-galactose to form alpha-D-galactose-1-phosphate (Gal-1-P). This chain is Galactokinase, found in Salmonella paratyphi A (strain ATCC 9150 / SARB42).